A 247-amino-acid polypeptide reads, in one-letter code: tRNA pseudouridine synthase A (247 aa).

Aspartate 58 (nucleophile) is an active-site residue. Position 116 (tyrosine 116) interacts with substrate.

The protein belongs to the tRNA pseudouridine synthase TruA family. Homodimer.

It carries out the reaction uridine(38/39/40) in tRNA = pseudouridine(38/39/40) in tRNA. In terms of biological role, formation of pseudouridine at positions 38, 39 and 40 in the anticodon stem and loop of transfer RNAs. The sequence is that of tRNA pseudouridine synthase A from Hydrogenobaculum sp. (strain Y04AAS1).